The primary structure comprises 453 residues: Ribulose bisphosphate carboxylase large chain (453 aa).

Residues 1–2 constitute a propeptide that is removed on maturation; that stretch reads MS. N-acetylproline is present on P3. K14 carries the post-translational modification N6,N6,N6-trimethyllysine. Residues N123 and T173 each contribute to the substrate site. K175 serves as the catalytic Proton acceptor. A substrate-binding site is contributed by K177. Mg(2+) contacts are provided by K201, D203, and E204. K201 bears the N6-carboxylysine mark. Residue H294 is the Proton acceptor of the active site. Positions 295, 327, and 379 each coordinate substrate.

This sequence belongs to the RuBisCO large chain family. Type I subfamily. As to quaternary structure, heterohexadecamer of 8 large chains and 8 small chains; disulfide-linked. The disulfide link is formed within the large subunit homodimers. Mg(2+) serves as cofactor. The disulfide bond which can form in the large chain dimeric partners within the hexadecamer appears to be associated with oxidative stress and protein turnover.

Its subcellular location is the plastid. It is found in the chloroplast. The enzyme catalyses 2 (2R)-3-phosphoglycerate + 2 H(+) = D-ribulose 1,5-bisphosphate + CO2 + H2O. It carries out the reaction D-ribulose 1,5-bisphosphate + O2 = 2-phosphoglycolate + (2R)-3-phosphoglycerate + 2 H(+). Its function is as follows. RuBisCO catalyzes two reactions: the carboxylation of D-ribulose 1,5-bisphosphate, the primary event in carbon dioxide fixation, as well as the oxidative fragmentation of the pentose substrate in the photorespiration process. Both reactions occur simultaneously and in competition at the same active site. The polypeptide is Ribulose bisphosphate carboxylase large chain (Phuopsis stylosa (Caucasian crosswort)).